The primary structure comprises 884 residues: Probable inorganic carbon transporter subunit DabA (884 aa).

4 residues coordinate Zn(2+): cysteine 390, aspartate 392, histidine 582, and cysteine 597.

The protein belongs to the inorganic carbon transporter (TC 9.A.2) DabA family. Forms a complex with DabB. Zn(2+) is required as a cofactor.

Its subcellular location is the cell membrane. Part of an energy-coupled inorganic carbon pump. The protein is Probable inorganic carbon transporter subunit DabA of Staphylococcus saprophyticus subsp. saprophyticus (strain ATCC 15305 / DSM 20229 / NCIMB 8711 / NCTC 7292 / S-41).